A 474-amino-acid polypeptide reads, in one-letter code: Glutamate--tRNA ligase (474 aa).

A 'HIGH' region motif is present at residues 10-20; it reads PSPTGYLHIGG. Residues Cys107, Cys109, Cys134, and Asp136 each contribute to the Zn(2+) site. Positions 244 to 248 match the 'KMSKS' region motif; the sequence is RLSKR. Lys247 is a binding site for ATP.

Belongs to the class-I aminoacyl-tRNA synthetase family. Glutamate--tRNA ligase type 1 subfamily. As to quaternary structure, monomer. It depends on Zn(2+) as a cofactor.

The protein resides in the cytoplasm. It catalyses the reaction tRNA(Glu) + L-glutamate + ATP = L-glutamyl-tRNA(Glu) + AMP + diphosphate. Its function is as follows. Catalyzes the attachment of glutamate to tRNA(Glu) in a two-step reaction: glutamate is first activated by ATP to form Glu-AMP and then transferred to the acceptor end of tRNA(Glu). The protein is Glutamate--tRNA ligase of Anaeromyxobacter dehalogenans (strain 2CP-C).